A 683-amino-acid chain; its full sequence is Boron transporter 4 (683 aa).

At 1–38 the chain is on the cytoplasmic side; the sequence is MEEERVDSSKRLFRGIVADLRGRALCYKEDWVAGLRSG. A helical transmembrane segment spans residues 39–59; the sequence is FGILAPTTYIFFASALPVIAF. The Extracellular segment spans residues 60 to 80; the sequence is GEQLSRDTEGALSTVETLAST. Residues 81–101 form a helical membrane-spanning segment; the sequence is ALCGVIHSILGGQPLLILGVA. Topologically, residues 102 to 126 are cytoplasmic; the sequence is EPTVLMYVYLYNFAIGRPELGKQLY. A helical membrane pass occupies residues 127–147; sequence LAWAAWVCVWTALLLFVMAIL. The Extracellular portion of the chain corresponds to 148–160; the sequence is NTADIINRFTRVA. Residues 161–181 form a helical membrane-spanning segment; sequence GELFGMLISVLFIQQAIKGMV. Over 182–200 the chain is Cytoplasmic; it reads SEFGMPKDEDSKLEKYKFE. The chain crosses the membrane as a helical span at residues 201–221; it reads WLYTNGLLGLIFTFGLLYTAL. Topologically, residues 222 to 238 are extracellular; it reads KSRKARSWRYGTGWYRS. Residues 239–259 traverse the membrane as a helical segment; it reads FIADYGVPLMVVVWTALSFST. Topologically, residues 260–294 are cytoplasmic; it reads PSKLPSGVPRRLFSPLPWDSPSLSHWTVIKDMGKV. The helical transmembrane segment at 295-315 threads the bilayer; that stretch reads SPGYIFAAFIPALMIAGLYFF. At 316 to 335 the chain is on the extracellular side; the sequence is DHSVASQLAQQKEFNLKKPS. A helical transmembrane segment spans residues 336–356; sequence AYHYDILLLGFMTLICGLLGL. At 357–477 the chain is on the cytoplasmic side; that stretch reads PPSNGVLPQS…EQRVSNLLQS (121 aa). Residues 478-498 traverse the membrane as a helical segment; it reads LLVAGAVLAMPAIKLIPTSIL. Residues 499–565 are Extracellular-facing; that stretch reads WGYFAYMAID…QIFYFGLCYG (67 aa). A helical transmembrane segment spans residues 566–586; it reads VTWIPVAGIMFPVPFFLLIAI. At 587 to 683 the chain is on the cytoplasmic side; sequence RQYILPKLFN…GDGDMSTTRE (97 aa). 2 disordered regions span residues 617-638 and 661-683; these read NPLE…GDAE and KGNQ…TTRE.

This sequence belongs to the anion exchanger (TC 2.A.31.3) family. Expressed in the distal sides of epidermal cells in the elongation zone of roots.

The protein resides in the membrane. Functionally, efflux-type boron transporter polarly localized in roots. Boron is essential for maintaining the integrity of plants cell walls. The chain is Boron transporter 4 (BOR4) from Arabidopsis thaliana (Mouse-ear cress).